Consider the following 389-residue polypeptide: Epidermis-specific secreted glycoprotein EP1 (389 aa).

Residues 1–24 (MARFFPLTLTILLFFIQRIDFCHT) form the signal peptide. A glycan (N-linked (GlcNAc...) (complex) asparagine) is linked at Asn29. One can recognise a Bulb-type lectin domain in the interval 88–193 (MRWVWEANRG…ASPGENVNGP (106 aa)). N-linked (GlcNAc...) asparagine glycosylation is found at Asn103, Asn230, and Asn235. The N-linked (GlcNAc...) (high mannose) asparagine glycan is linked to Asn274.

In terms of tissue distribution, in 14-day old seedlings, expressed in the epidermis and apical dome of the shoot and in the hypocotyl, cotyledon and epidermis of the root. In developing seeds, expressed in both the inner and outer epidermis of the integument.

It localises to the secreted. Its function is as follows. May be involved in the limitation of water flow through the outer epidermal cell wall, either by direct modification of wall structure or as a signal instructing the protoplast to restrict water transport across the cell wall. The protein is Epidermis-specific secreted glycoprotein EP1 (EP1) of Daucus carota (Wild carrot).